The primary structure comprises 876 residues: Leucine--tRNA ligase (876 aa).

The segment at 1-20 (MATERYNPRDAEPRWQQKWN) is disordered. The short motif at 43–53 (PYPSGRIHMGH) is the 'HIGH' region element. The 'KMSKS' region motif lies at 632–636 (KMSKS). Lysine 635 contributes to the ATP binding site.

It belongs to the class-I aminoacyl-tRNA synthetase family.

The protein resides in the cytoplasm. It catalyses the reaction tRNA(Leu) + L-leucine + ATP = L-leucyl-tRNA(Leu) + AMP + diphosphate. The protein is Leucine--tRNA ligase of Rhizobium leguminosarum bv. trifolii (strain WSM2304).